The following is a 90-amino-acid chain: Kunitz-type serine protease inhibitor C1 (90 aa).

A signal peptide spans 1-24 (MSSGGLLLLLGLLTLWAELTPISG). Q25 is modified (pyrrolidone carboxylic acid). Residues 31–81 (CNLAPESGRCRGHLRRIYYNPDSNKCEVFFYGGCGGNDNNFETRKKCRQTC) enclose the BPTI/Kunitz inhibitor domain. 3 cysteine pairs are disulfide-bonded: C31/C81, C40/C64, and C56/C77. Residues 85-90 (RKGRPT) constitute a propeptide that is removed on maturation.

Belongs to the venom Kunitz-type family. In terms of tissue distribution, expressed by the venom gland.

It localises to the secreted. Its function is as follows. Serine protease inhibitor that inhibits trypsin. This is Kunitz-type serine protease inhibitor C1 from Daboia siamensis (Eastern Russel's viper).